A 414-amino-acid chain; its full sequence is Esterase FrsA (414 aa).

It belongs to the FrsA family.

It carries out the reaction a carboxylic ester + H2O = an alcohol + a carboxylate + H(+). Functionally, catalyzes the hydrolysis of esters. The sequence is that of Esterase FrsA from Escherichia coli O139:H28 (strain E24377A / ETEC).